We begin with the raw amino-acid sequence, 214 residues long: Thymidylate kinase (214 aa).

G10–S17 is an ATP binding site.

Belongs to the thymidylate kinase family.

The enzyme catalyses dTMP + ATP = dTDP + ADP. In terms of biological role, phosphorylation of dTMP to form dTDP in both de novo and salvage pathways of dTTP synthesis. The sequence is that of Thymidylate kinase from Brucella suis biovar 1 (strain 1330).